The primary structure comprises 601 residues: ATP-dependent lipid A-core flippase (601 aa).

Helical transmembrane passes span 27–47 (IGLF…QPML), 83–103 (LLIV…NYFL), 174–194 (LLWM…LIAV), and 267–287 (PLLQ…VLYL). The 292-residue stretch at 31 to 322 (LISIVGFLIF…LSEVSSTIQK (292 aa)) folds into the ABC transmembrane type-1 domain. Residues 354–590 (LEVRNLSFTY…NGYYSRLHAM (237 aa)) enclose the ABC transporter domain. 388-395 (GRSGSGKS) lines the ATP pocket.

This sequence belongs to the ABC transporter superfamily. Lipid exporter (TC 3.A.1.106) family. As to quaternary structure, homodimer.

It is found in the cell inner membrane. The enzyme catalyses ATP + H2O + lipid A-core oligosaccharideSide 1 = ADP + phosphate + lipid A-core oligosaccharideSide 2.. Its function is as follows. Involved in lipopolysaccharide (LPS) biosynthesis. Translocates lipid A-core from the inner to the outer leaflet of the inner membrane. Transmembrane domains (TMD) form a pore in the inner membrane and the ATP-binding domain (NBD) is responsible for energy generation. This chain is ATP-dependent lipid A-core flippase, found in Pseudomonas fluorescens (strain ATCC BAA-477 / NRRL B-23932 / Pf-5).